The chain runs to 139 residues: MNSCRVAPTPHEVTIDPGPSVLLQVEKLWLKYHELQTLYYSAYVESFHFRYFHIEALRYLKLYNNFKTVCRLLERVKRLLSLKYATFTPEMGGGGCGGGCGGGDVPSTLGSEELKVLVNYKDIKKFLDTNNLWSVVESS.

This is an uncharacterized protein from Invertebrate iridescent virus 3 (IIV-3).